We begin with the raw amino-acid sequence, 271 residues long: GATA transcription factor 19 (271 aa).

The interval 1–23 (MAAEPPADGRDPPADDGAAGDGA) is disordered. The Tify domain occupies 33-68 (LSAASEQLTLVYQGEVYVFDPVPPQKVQAVLLVLGG). The CCT domain maps to 95–137 (RVASLMRFREKRKERCFDKKIRYSVRKEVAQKMKRRKGQFAGR). A GATA-type zinc finger spans residues 166–193 (CQNCGISSRLTPAMRRGPAGPRSLCNAC). The segment at 238-271 (NQTTMKTDTEMVPEQEQKADVLPPTKEEDSMATS) is disordered. Positions 252-271 (QEQKADVLPPTKEEDSMATS) are enriched in basic and acidic residues.

Belongs to the type IV zinc-finger family. Class C subfamily.

It is found in the nucleus. In terms of biological role, transcriptional activator that specifically binds 5'-GATA-3' or 5'-GAT-3' motifs within gene promoters. This chain is GATA transcription factor 19, found in Oryza sativa subsp. japonica (Rice).